Consider the following 82-residue polypeptide: Beta-insect depressant toxin LqqIT2 (82 aa).

The signal sequence occupies residues 1-21 (MKLLLLLIVSASMLIESLVNA). Residues 22–82 (DGYIRKRDGC…TWKSETNTCG (61 aa)) enclose the LCN-type CS-alpha/beta domain. Disulfide bonds link C31–C81, C35–C56, C42–C63, and C46–C65.

It belongs to the long (4 C-C) scorpion toxin superfamily. Sodium channel inhibitor family. Beta subfamily. In terms of tissue distribution, expressed by the venom gland.

It localises to the secreted. Functionally, depressant insect beta-toxins cause a transient contraction paralysis followed by a slow flaccid paralysis. They bind voltage-independently at site-4 of sodium channels and shift the voltage of activation toward more negative potentials thereby affecting sodium channel activation and promoting spontaneous and repetitive firing. Aside from typical beta-toxin effects, this toxin also affects the inactivation process and ion selectivity of the insect voltage-gated sodium channel. This toxin is active only on insects. Is active on the insect voltage-gated sodium channel para. In vivo, when injected intraperitoneally, it exhibits analgesic activity, increasing hot plate and tail flick withdrawal latencies in a dose-dependent fashion. This phenomenon might be partly due to an inhibitory mechanism activated by noxious stimuli. This Leiurus quinquestriatus quinquestriatus (Egyptian scorpion) protein is Beta-insect depressant toxin LqqIT2.